A 729-amino-acid polypeptide reads, in one-letter code: Anti-bacteriophage protein B (729 aa).

One can recognise a Helicase ATP-binding domain in the interval 109–271 (FDLLKSGQNV…KLGYPHTFVS (163 aa)). 122 to 129 (APTSMGKS) serves as a coordination point for ATP. One can recognise a Helicase C-terminal domain in the interval 297 to 472 (ALGEIAHACV…GIDTPINLLA (176 aa)).

Belongs to the helicase family. In terms of assembly, interacts with AbpB.

Part of an antiviral system composed of AbpA and AbpB; when both are expressed from a plasmid they confer resistance to phages T2, T4, T7 and lambda but not RB32 or RB69. Resistance is temperature dependent, it can be seen at 30 degrees Celsius but not at 37 or 42 degrees Celsius. The system impairs phage but not bacterial DNA synthesis (shown for T4, T7 and lambda). Partially suppressed by mutations in T4 gene 41, a replicative helicase. Its function is as follows. Deletion or mutations in this gene were selected in directed evolution experiments for resistance to intense ionizing radiation (3000 Gy). In Escherichia coli (strain K12), this protein is Anti-bacteriophage protein B.